Reading from the N-terminus, the 427-residue chain is Dihydroorotase (427 aa).

Zn(2+) is bound by residues histidine 60 and histidine 62. Substrate is bound by residues 62-64 and asparagine 94; that span reads HFR. Zn(2+) contacts are provided by aspartate 152, histidine 179, and histidine 232. Position 278 (asparagine 278) interacts with substrate. Aspartate 305 provides a ligand contact to Zn(2+). Aspartate 305 is a catalytic residue. Residues histidine 309 and 323-324 each bind substrate; that span reads FG.

This sequence belongs to the metallo-dependent hydrolases superfamily. DHOase family. Class I DHOase subfamily. Zn(2+) is required as a cofactor.

The enzyme catalyses (S)-dihydroorotate + H2O = N-carbamoyl-L-aspartate + H(+). The protein operates within pyrimidine metabolism; UMP biosynthesis via de novo pathway; (S)-dihydroorotate from bicarbonate: step 3/3. In terms of biological role, catalyzes the reversible cyclization of carbamoyl aspartate to dihydroorotate. This chain is Dihydroorotase, found in Enterococcus faecalis (strain ATCC 700802 / V583).